A 245-amino-acid chain; its full sequence is Endonuclease III (245 aa).

In terms of domain architecture, HhH spans 119–138 (MVDLFTLPGVGRKTANVILG). [4Fe-4S] cluster-binding residues include Cys-198, Cys-205, Cys-208, and Cys-214.

It belongs to the Nth/MutY family. The cofactor is [4Fe-4S] cluster.

The enzyme catalyses 2'-deoxyribonucleotide-(2'-deoxyribose 5'-phosphate)-2'-deoxyribonucleotide-DNA = a 3'-end 2'-deoxyribonucleotide-(2,3-dehydro-2,3-deoxyribose 5'-phosphate)-DNA + a 5'-end 5'-phospho-2'-deoxyribonucleoside-DNA + H(+). Its function is as follows. DNA repair enzyme that has both DNA N-glycosylase activity and AP-lyase activity. The DNA N-glycosylase activity releases various damaged pyrimidines from DNA by cleaving the N-glycosidic bond, leaving an AP (apurinic/apyrimidinic) site. The AP-lyase activity cleaves the phosphodiester bond 3' to the AP site by a beta-elimination, leaving a 3'-terminal unsaturated sugar and a product with a terminal 5'-phosphate. The chain is Endonuclease III from Mycobacterium leprae (strain TN).